Reading from the N-terminus, the 117-residue chain is cAMP-regulated phosphoprotein 19-A (117 aa).

Basic and acidic residues predominate over residues 1-37 (MSGENQETKAQEESSALEQKEIDDKVVSPEKSEEIKL). The segment at 1–54 (MSGENQETKAQEESSALEQKEIDDKVVSPEKSEEIKLKARYPNLGPKPGGSDFL) is disordered. The residue at position 28 (Ser-28) is a Phosphoserine; by CDK2. Ser-67 is modified (phosphoserine; by GWL). The disordered stretch occupies residues 78–117 (KNKQLPTAASDKTEVTGDHIPTPQDLPQRKPSLVASKLAG). The residue at position 99 (Thr-99) is a Phosphothreonine; by CDK2. Ser-109 is subject to Phosphoserine; by PKA.

This sequence belongs to the endosulfine family. Interacts (when phosphorylated at Ser-67) with ppp2r2d. Phosphorylation at Ser-67 by gwl during mitosis is essential for interaction with ppp2r2d (PR55-delta) and subsequent inactivation of PP2A. Phosphorylated by PKA.

It localises to the cytoplasm. Functionally, protein phosphatase inhibitor that specifically inhibits protein phosphatase 2A (PP2A) during mitosis. When phosphorylated at Ser-67 during mitosis, specifically interacts with ppp2r2d (PR55-delta) and inhibits its activity, leading to inactivation of PP2A, an essential condition to keep cyclin-B1-CDK1 activity high during M phase. The protein is cAMP-regulated phosphoprotein 19-A (arpp19-a) of Xenopus laevis (African clawed frog).